We begin with the raw amino-acid sequence, 129 residues long: uncharacterized protein (129 aa).

Belongs to the asfivirus C129R family.

The protein resides in the virion. In terms of biological role, plays a role in the inhibition of type I interferon signaling pathway. Mechanistically, specifically interacts with 2',3'-cGAMP and cleaves it via its phosphodiesterase activity. In turn, prevents 2',3'-cGAMP interaction with host ER-resident STING1 leading to inhibition of downstream signaling pathway and type I interferon production. This is an uncharacterized protein from Ornithodoros (relapsing fever ticks).